The sequence spans 592 residues: MYRQDHVFVVLCAVLLAGQVTAVPAGTGINPHSPPLGPFESVRFASQTQSQIASSRGPFTWLRDTVIERIWGIDKKHSNKVGSQPRPEKSWSRYGSDIVLRMEVHSTEEVEALADAVNILFLDVWDSNENYVDIRMAKEVVPSLLGLLPQSLQKSHTLLIEDLSKAIYESRYPTRDYQRHTIDQTDCHTVPRPLDVADLFFDHYQPFNVILQWMRLIVSMFPSHAQLVNVGVTHEGRDIPAFRLGVRSRDDEQEGPRKTIMIVGGSHAREWISTSTVAYIAFQLVTEFGNSVAITKLLEDFDWVLVPTINPDGYVYSWDMDRLWRKNRQPTGLPFCPGIDLDRSWGYEWDGQGTRANPCSESYAGNNPFDSIETRTIAEWAYNQTQDKRTDFIGFLDLHSYSQQILYPYSYSCSTVPPTLENLEELAFGIAKAIRMTNQEAYAVKSACEGVVTTDKGNGQRVSANVESTGGSALDWFYHQLHAKYSYQIKLRDKGMYGFLLPPEHIVPTGREIFNSVLVLGHFLLGEDANALEWEFIPGSKSTSEQENGSSRTFDRLFFNMNEDELEKPGNDRDYSSVVEEDVYQDEGWGLW.

Positions 1–22 (MYRQDHVFVVLCAVLLAGQVTA) are cleaved as a signal peptide. Residues 23 to 175 (VPAGTGINPH…AIYESRYPTR (153 aa)) constitute a propeptide that is removed on maturation. Residues 203–524 (HYQPFNVILQ…NSVLVLGHFL (322 aa)) enclose the Peptidase M14 domain. Zn(2+) is bound by residues His-267 and Glu-270. Substrate is bound by residues 267-270 (HARE), Arg-325, and 342-343 (DR). Cys-336 and Cys-359 are joined by a disulfide. A glycan (N-linked (GlcNAc...) asparagine) is linked at Asn-383. His-399 provides a ligand contact to Zn(2+). Residue 400–401 (SY) participates in substrate binding. The N-linked (GlcNAc...) asparagine glycan is linked to Asn-548.

This sequence belongs to the peptidase M14 family. Zn(2+) is required as a cofactor.

It localises to the vacuole. Its subcellular location is the secreted. Functionally, inactive carboxypeptidase that may play a role in cell wall organization and biogenesis. The protein is Inactive metallocarboxypeptidase ecm14 (ecm14) of Talaromyces stipitatus (strain ATCC 10500 / CBS 375.48 / QM 6759 / NRRL 1006) (Penicillium stipitatum).